The primary structure comprises 426 residues: Phosphoribosylamine--glycine ligase (426 aa).

Residues 113-320 (KSLMTEAKIP…LLELLYRAST (208 aa)) enclose the ATP-grasp domain. 139-200 (LESKSIPIVI…EEFMEGQEAS (62 aa)) contacts ATP. Mg(2+)-binding residues include E290 and N292.

Belongs to the GARS family. Mg(2+) is required as a cofactor. Requires Mn(2+) as cofactor.

It catalyses the reaction 5-phospho-beta-D-ribosylamine + glycine + ATP = N(1)-(5-phospho-beta-D-ribosyl)glycinamide + ADP + phosphate + H(+). It functions in the pathway purine metabolism; IMP biosynthesis via de novo pathway; N(1)-(5-phospho-D-ribosyl)glycinamide from 5-phospho-alpha-D-ribose 1-diphosphate: step 2/2. This is Phosphoribosylamine--glycine ligase from Leptospira interrogans serogroup Icterohaemorrhagiae serovar Lai (strain 56601).